The primary structure comprises 83 residues: uncharacterized protein (83 aa).

Helical transmembrane passes span Phe-11 to Leu-31 and Trp-48 to Met-68.

Its subcellular location is the cell membrane. This is an uncharacterized protein from Bacillus subtilis (strain 168).